Here is a 457-residue protein sequence, read N- to C-terminus: Adenylosuccinate synthetase isozyme 1 (457 aa).

Residues 1–24 (MSGTRASNDRPPGTGGVKRGRLQQ) form a disordered region. GTP is bound by residues 42 to 48 (GDEGKGK) and 70 to 72 (GHT). Residue D43 is the Proton acceptor of the active site. Mg(2+)-binding residues include D43 and G70. D43 contacts substrate. Residues 43 to 46 (DEGK), 68 to 71 (NAGH), T163, R177, N256, T271, and R335 contribute to the IMP site. H71 functions as the Proton donor in the catalytic mechanism. Position 331 to 337 (331 to 337 (VTTGRKR)) interacts with substrate. GTP is bound by residues R337, 363-365 (KLD), and 445-448 (GVGK).

It belongs to the adenylosuccinate synthetase family. Homodimer. It depends on Mg(2+) as a cofactor. High levels in muscle.

It localises to the cytoplasm. It is found in the membrane. It carries out the reaction IMP + L-aspartate + GTP = N(6)-(1,2-dicarboxyethyl)-AMP + GDP + phosphate + 2 H(+). The protein operates within purine metabolism; AMP biosynthesis via de novo pathway; AMP from IMP: step 1/2. With respect to regulation, weakly inhibited by AMP non-competitively to all substrates. Inhibited by IMP non-competitively with respect to GTP. Inhibited by fructose 1,6-bisphosphate competitively with respect to IMP. Its function is as follows. Component of the purine nucleotide cycle (PNC), which interconverts IMP and AMP to regulate the nucleotide levels in various tissues, and which contributes to glycolysis and ammoniagenesis. Catalyzes the first committed step in the biosynthesis of AMP from IMP. The sequence is that of Adenylosuccinate synthetase isozyme 1 (Adss1) from Mus musculus (Mouse).